A 347-amino-acid chain; its full sequence is Very-long-chain 3-oxoacyl-CoA reductase (347 aa).

A helical transmembrane segment spans residues 22 to 42 (LLWSIFGFGVLKATTLILRIM). Positions 68, 122, 149, 223, 227, 256, and 258 each coordinate NADP(+). The Proton donor role is filled by Tyr-223. Lys-227 acts as the Lowers pKa of active site Tyr in catalysis.

Belongs to the short-chain dehydrogenases/reductases (SDR) family.

It localises to the endoplasmic reticulum membrane. The enzyme catalyses a very-long-chain (3R)-3-hydroxyacyl-CoA + NADP(+) = a very-long-chain 3-oxoacyl-CoA + NADPH + H(+). Its pathway is lipid metabolism; fatty acid biosynthesis. Component of the microsomal membrane bound fatty acid elongation system, which produces the 26-carbon very long-chain fatty acids (VLCFA) from palmitate. Catalyzes the reduction of the 3-ketoacyl-CoA intermediate that is formed in each cycle of fatty acid elongation. VLCFAs serve as precursors for ceramide and sphingolipids. The sequence is that of Very-long-chain 3-oxoacyl-CoA reductase from Vanderwaltozyma polyspora (strain ATCC 22028 / DSM 70294 / BCRC 21397 / CBS 2163 / NBRC 10782 / NRRL Y-8283 / UCD 57-17) (Kluyveromyces polysporus).